The following is a 77-amino-acid chain: MVVNAVVGADEASARLREYCSGLPDVEKKIAESTSPEGAKLVSDFGIGSVPMVVILDEDSSELFRTADIGELEKFFS.

This is an uncharacterized protein from Treponema pallidum (strain Nichols).